Reading from the N-terminus, the 643-residue chain is Threonine--tRNA ligase (643 aa).

A TGS domain is found at 1–62; the sequence is MSFSVTLPDG…DEDVEAAIIT (62 aa). Positions 239-537 are catalytic; the sequence is DHRTIGRDLD…LTEIYKGAFP (299 aa). Positions 333, 384, and 514 each coordinate Zn(2+).

The protein belongs to the class-II aminoacyl-tRNA synthetase family. In terms of assembly, homodimer. Zn(2+) is required as a cofactor.

Its subcellular location is the cytoplasm. It carries out the reaction tRNA(Thr) + L-threonine + ATP = L-threonyl-tRNA(Thr) + AMP + diphosphate + H(+). Functionally, catalyzes the attachment of threonine to tRNA(Thr) in a two-step reaction: L-threonine is first activated by ATP to form Thr-AMP and then transferred to the acceptor end of tRNA(Thr). Also edits incorrectly charged L-seryl-tRNA(Thr). In Lactobacillus gasseri (strain ATCC 33323 / DSM 20243 / BCRC 14619 / CIP 102991 / JCM 1131 / KCTC 3163 / NCIMB 11718 / NCTC 13722 / AM63), this protein is Threonine--tRNA ligase.